The sequence spans 883 residues: Alanine--tRNA ligase (883 aa).

The Zn(2+) site is built by H563, H567, C677, and H681.

The protein belongs to the class-II aminoacyl-tRNA synthetase family. Requires Zn(2+) as cofactor.

The protein localises to the cytoplasm. The enzyme catalyses tRNA(Ala) + L-alanine + ATP = L-alanyl-tRNA(Ala) + AMP + diphosphate. In terms of biological role, catalyzes the attachment of alanine to tRNA(Ala) in a two-step reaction: alanine is first activated by ATP to form Ala-AMP and then transferred to the acceptor end of tRNA(Ala). Also edits incorrectly charged Ser-tRNA(Ala) and Gly-tRNA(Ala) via its editing domain. In Cereibacter sphaeroides (strain ATCC 17023 / DSM 158 / JCM 6121 / CCUG 31486 / LMG 2827 / NBRC 12203 / NCIMB 8253 / ATH 2.4.1.) (Rhodobacter sphaeroides), this protein is Alanine--tRNA ligase.